The primary structure comprises 221 residues: Small histidine-alanine-rich protein (221 aa).

Residues 1 to 21 (MVSFSKNKILSAAVFASVLLL) form the signal peptide. A compositionally biased stretch (basic and acidic residues) spans 52–67 (AHAGDAHHAHHVADAH). Disordered regions lie at residues 52-141 (AHAG…AANA) and 180-221 (AHHD…HLHH). Tandem repeats lie at residues 57 to 59 (AHH) and 60 to 62 (AHH). Positions 57 to 68 (AHHAHHVADAHH) are 4 X 3 AA approximate tandem repeats of A-H-H. A 1-3; approximate repeat occupies 63–65 (VAD). 13 repeat units span residues 66 to 68 (AHH), 69 to 74 (AHHAAN), 75 to 80 (AHHAAN), 81 to 86 (AHHAAN), 87 to 92 (AHHAAN), 93 to 98 (AHHAAN), 99 to 104 (AHHAAN), 105 to 110 (AHHAAN), 111 to 116 (AHHAAN), 117 to 122 (AHHAAN), 123 to 128 (AHHAAN), 129 to 134 (AHHAAN), and 135 to 140 (AHHAAN). Residues 69-146 (AHHAANAHHA…HAANAHHAAD (78 aa)) are 13 X 6 AA approximate tandem repeats of A-H-H-A-A-N. A compositionally biased stretch (low complexity) spans 75–141 (AHHAANAHHA…AANAHHAANA (67 aa)). One copy of the 2-13; approximate repeat lies at 141 to 146 (AHHAAD). Repeat copies occupy residues 176–180 (HHDDA), 181–185 (HHDGA), 186–190 (HHDDA), 191–195 (HHDGA), 196–200 (HHDGA), 201–205 (HHDGA), and 206–210 (HHDGA). Residues 176–210 (HHDDAHHDGAHHDDAHHDGAHHDGAHHDGAHHDGA) form a 7 X 5 AA tandem repeats of H-H-D-[DG]-A region. Residues 180–211 (AHHDGAHHDDAHHDGAHHDGAHHDGAHHDGAH) are compositionally biased toward basic and acidic residues.

The protein is Small histidine-alanine-rich protein of Plasmodium falciparum (isolate FC27 / Papua New Guinea).